We begin with the raw amino-acid sequence, 363 residues long: Galactokinase (363 aa).

Substrate is bound at residue 16 to 19 (EHTD). ATP contacts are provided by residues serine 50 and 103–109 (GSGLSSS). Mg(2+) contacts are provided by serine 109 and glutamate 141. Residue aspartate 153 is the Proton acceptor of the active site. Substrate is bound at residue tyrosine 205.

This sequence belongs to the GHMP kinase family. GalK subfamily.

It is found in the cytoplasm. The enzyme catalyses alpha-D-galactose + ATP = alpha-D-galactose 1-phosphate + ADP + H(+). It functions in the pathway carbohydrate metabolism; galactose metabolism. Functionally, catalyzes the transfer of the gamma-phosphate of ATP to D-galactose to form alpha-D-galactose-1-phosphate (Gal-1-P). The sequence is that of Galactokinase from Mycobacterium bovis (strain ATCC BAA-935 / AF2122/97).